We begin with the raw amino-acid sequence, 704 residues long: Ubiquitin-like modifier-activating enzyme atg7 (704 aa).

The GXGXXG motif motif lies at 372–377; sequence GAGTLG. The active-site Glycyl thioester intermediate is Cys-555. The segment at 660–699 is homodimerization; that stretch reads ALTEKDYITELSGLAEVQRKAEAAANDVEWDSDEEGMEDE. The disordered stretch occupies residues 682–704; that stretch reads AAANDVEWDSDEEGMEDEEPELL. Residues 687-704 show a composition bias toward acidic residues; sequence VEWDSDEEGMEDEEPELL.

It belongs to the ATG7 family. Homodimer. Interacts with ATG8 through a thioester bond between Cys-555 and the C-terminal Gly of ATG8 and with ATG12 through a thioester bond between Cys-555 and the C-terminal Gly of ATG12. Also interacts with ATG3.

It is found in the cytoplasm. The protein localises to the preautophagosomal structure. E1-like activating enzyme involved in the 2 ubiquitin-like systems required for cytoplasm to vacuole transport (Cvt) and autophagy. Activates ATG12 for its conjugation with ATG5 and ATG8 for its conjugation with phosphatidylethanolamine. Both systems are needed for the ATG8 association to Cvt vesicles and autophagosomes membranes. Autophagy is essential for maintenance of amino acid levels and protein synthesis under nitrogen starvation. Required for selective autophagic degradation of the nucleus (nucleophagy) as well as for mitophagy which contributes to regulate mitochondrial quantity and quality by eliminating the mitochondria to a basal level to fulfill cellular energy requirements and preventing excess ROS production. Required for normal mycelial growth and conidiogenesis, and regulates sclerotial formation. Plays an essential role in pathogenesis. The chain is Ubiquitin-like modifier-activating enzyme atg7 from Botryotinia fuckeliana (strain T4) (Noble rot fungus).